We begin with the raw amino-acid sequence, 296 residues long: Formamidopyrimidine-DNA glycosylase (296 aa).

Pro-2 (schiff-base intermediate with DNA) is an active-site residue. The Proton donor role is filled by Glu-3. Lys-61 serves as the catalytic Proton donor; for beta-elimination activity. 3 residues coordinate DNA: His-104, Arg-123, and Lys-169. The segment at 255-289 (DAYGREGEPCRRCGAIMRREKFMNRSSFYCPRCQP) adopts an FPG-type zinc-finger fold. The active-site Proton donor; for delta-elimination activity is Arg-279.

It belongs to the FPG family. Monomer. Zn(2+) is required as a cofactor.

It carries out the reaction Hydrolysis of DNA containing ring-opened 7-methylguanine residues, releasing 2,6-diamino-4-hydroxy-5-(N-methyl)formamidopyrimidine.. The catalysed reaction is 2'-deoxyribonucleotide-(2'-deoxyribose 5'-phosphate)-2'-deoxyribonucleotide-DNA = a 3'-end 2'-deoxyribonucleotide-(2,3-dehydro-2,3-deoxyribose 5'-phosphate)-DNA + a 5'-end 5'-phospho-2'-deoxyribonucleoside-DNA + H(+). Its function is as follows. Involved in base excision repair of DNA damaged by oxidation or by mutagenic agents. Acts as a DNA glycosylase that recognizes and removes damaged bases. Has a preference for oxidized purines, such as 7,8-dihydro-8-oxoguanine (8-oxoG). Has AP (apurinic/apyrimidinic) lyase activity and introduces nicks in the DNA strand. Cleaves the DNA backbone by beta-delta elimination to generate a single-strand break at the site of the removed base with both 3'- and 5'-phosphates. This chain is Formamidopyrimidine-DNA glycosylase, found in Mycobacterium sp. (strain JLS).